Here is a 594-residue protein sequence, read N- to C-terminus: A-type ATP synthase subunit A (594 aa).

236-243 (GPFGSGKT) lines the ATP pocket.

Belongs to the ATPase alpha/beta chains family. As to quaternary structure, has multiple subunits with at least A(3), B(3), C, D, E, F, H, I and proteolipid K(x).

The protein resides in the cell membrane. It catalyses the reaction ATP + H2O + 4 H(+)(in) = ADP + phosphate + 5 H(+)(out). Component of the A-type ATP synthase that produces ATP from ADP in the presence of a proton gradient across the membrane. The A chain is the catalytic subunit. The sequence is that of A-type ATP synthase subunit A from Pyrobaculum neutrophilum (strain DSM 2338 / JCM 9278 / NBRC 100436 / V24Sta) (Thermoproteus neutrophilus).